The chain runs to 156 residues: D-aminoacyl-tRNA deacylase (156 aa).

The short motif at Gly-139–Pro-140 is the Gly-cisPro motif, important for rejection of L-amino acids element.

This sequence belongs to the DTD family. As to quaternary structure, homodimer.

The protein localises to the cytoplasm. The catalysed reaction is glycyl-tRNA(Ala) + H2O = tRNA(Ala) + glycine + H(+). It catalyses the reaction a D-aminoacyl-tRNA + H2O = a tRNA + a D-alpha-amino acid + H(+). An aminoacyl-tRNA editing enzyme that deacylates mischarged D-aminoacyl-tRNAs. Also deacylates mischarged glycyl-tRNA(Ala), protecting cells against glycine mischarging by AlaRS. Acts via tRNA-based rather than protein-based catalysis; rejects L-amino acids rather than detecting D-amino acids in the active site. By recycling D-aminoacyl-tRNA to D-amino acids and free tRNA molecules, this enzyme counteracts the toxicity associated with the formation of D-aminoacyl-tRNA entities in vivo and helps enforce protein L-homochirality. This Marinobacter nauticus (strain ATCC 700491 / DSM 11845 / VT8) (Marinobacter aquaeolei) protein is D-aminoacyl-tRNA deacylase.